Reading from the N-terminus, the 354-residue chain is UPF0283 protein YcjF (354 aa).

The next 3 helical transmembrane spans lie at 71 to 91 (MVTV…VQWV), 101 to 121 (IALG…GSVV), and 214 to 234 (ESAL…FIAW).

The protein belongs to the UPF0283 family.

The protein localises to the cell inner membrane. This chain is UPF0283 protein YcjF (ycjF), found in Yersinia enterocolitica.